Here is an 87-residue protein sequence, read N- to C-terminus: Small ribosomal subunit protein uS17 (87 aa).

It belongs to the universal ribosomal protein uS17 family. As to quaternary structure, part of the 30S ribosomal subunit.

In terms of biological role, one of the primary rRNA binding proteins, it binds specifically to the 5'-end of 16S ribosomal RNA. The polypeptide is Small ribosomal subunit protein uS17 (Bacillus subtilis (strain 168)).